Consider the following 1307-residue polypeptide: Rho1 guanine nucleotide exchange factor TUS1 (1307 aa).

A compositionally biased stretch (polar residues) spans 1–10 (MYRYNRSSPF). Disordered stretches follow at residues 1–144 (MYRY…FIGN), 164–194 (PFAN…SDLR), and 219–239 (EDSE…NVSG). The segment covering 12–29 (RTPEKRVSRQESQRKSIE) has biased composition (basic and acidic residues). Positions 37-79 (NTRNSFLDDSDNGTDNISIGWTPISDTQQFQSPVPQAFTFTSK) are enriched in polar residues. A compositionally biased stretch (low complexity) spans 87–97 (TSSSESTPKST). Over residues 176–194 (SPRDSSKQQAHFSDESDLR) the composition is skewed to basic and acidic residues. The DH domain occupies 467-657 (QRQSFIFDLI…EKLNFEVNQV (191 aa)). A PH domain is found at 715–877 (KLVLSGTVYK…WIDAIMESFK (163 aa)). Residues 780–802 (TSKQPLRNYSQKEHKSPMHNFST) form a disordered region. Residues 938–1279 (TTRILCCEDV…KLASSERREK (342 aa)) enclose the CNH domain.

As to quaternary structure, interacts with RHO1.

Functionally, guanine nucleotide-exchange factor (GEF) for RHO1 that stimulates the exchange of RHO1 GDP-bound form into GTP-bound form. Required for signaling of cell wall defects to RHO1. The sequence is that of Rho1 guanine nucleotide exchange factor TUS1 (TUS1) from Saccharomyces cerevisiae (strain ATCC 204508 / S288c) (Baker's yeast).